The primary structure comprises 81 residues: Adipogenin (81 aa).

Residues 16 to 36 (FLVFWLCLPVALLLFLLIIWL) form a helical membrane-spanning segment.

The protein belongs to the adipogenin family. Highly expressed in subcutaneous, perirenal and mesecentric adipose tissue.

Its subcellular location is the membrane. The protein resides in the nucleus. Its function is as follows. Plays a role in stimulating adipocyte differentiation and development. The polypeptide is Adipogenin (Bos taurus (Bovine)).